The sequence spans 242 residues: Pyridoxine 5'-phosphate synthase (242 aa).

Asn7 serves as a coordination point for 3-amino-2-oxopropyl phosphate. Asp9 to His10 provides a ligand contact to 1-deoxy-D-xylulose 5-phosphate. Arg18 is a 3-amino-2-oxopropyl phosphate binding site. His44 (proton acceptor) is an active-site residue. 2 residues coordinate 1-deoxy-D-xylulose 5-phosphate: Arg46 and His51. Glu71 functions as the Proton acceptor in the catalytic mechanism. A 1-deoxy-D-xylulose 5-phosphate-binding site is contributed by Thr101. His192 functions as the Proton donor in the catalytic mechanism. Residues Gly193 and Gly214–His215 each bind 3-amino-2-oxopropyl phosphate.

It belongs to the PNP synthase family. Homooctamer; tetramer of dimers.

The protein localises to the cytoplasm. It catalyses the reaction 3-amino-2-oxopropyl phosphate + 1-deoxy-D-xylulose 5-phosphate = pyridoxine 5'-phosphate + phosphate + 2 H2O + H(+). It functions in the pathway cofactor biosynthesis; pyridoxine 5'-phosphate biosynthesis; pyridoxine 5'-phosphate from D-erythrose 4-phosphate: step 5/5. Catalyzes the complicated ring closure reaction between the two acyclic compounds 1-deoxy-D-xylulose-5-phosphate (DXP) and 3-amino-2-oxopropyl phosphate (1-amino-acetone-3-phosphate or AAP) to form pyridoxine 5'-phosphate (PNP) and inorganic phosphate. In Synechocystis sp. (strain ATCC 27184 / PCC 6803 / Kazusa), this protein is Pyridoxine 5'-phosphate synthase.